The chain runs to 134 residues: Large ribosomal subunit protein uL24 (134 aa).

It belongs to the universal ribosomal protein uL24 family. In terms of assembly, part of the 50S ribosomal subunit.

One of two assembly initiator proteins, it binds directly to the 5'-end of the 23S rRNA, where it nucleates assembly of the 50S subunit. Its function is as follows. Located at the polypeptide exit tunnel on the outside of the subunit. In Sulfolobus acidocaldarius (strain ATCC 33909 / DSM 639 / JCM 8929 / NBRC 15157 / NCIMB 11770), this protein is Large ribosomal subunit protein uL24.